We begin with the raw amino-acid sequence, 1176 residues long: Leucine--tRNA ligase, cytoplasmic (1176 aa).

L-leucine is bound by residues Y52 and Y54. Positions 60–63 (HLGH) match the 'HIGH' region motif. The interval 115–142 (PDFPDEEDEEEETNVKTEDTRIKDKAKG) is disordered. A compositionally biased stretch (acidic residues) spans 117 to 126 (FPDEEDEEEE). The span at 127–139 (TNVKTEDTRIKDK) shows a compositional bias: basic and acidic residues. The residue at position 167 (S167) is a Phosphoserine. The interval 260-509 (GPQEYTLLKL…DAGDALIYME (250 aa)) is editing domain. L-leucine contacts are provided by L594 and S597. Residues 716–720 (KMSKS) carry the 'KMSKS' region motif. K719 provides a ligand contact to ATP. S720 is modified (phosphoserine). Residues K970 and K1047 each carry the N6-acetyllysine modification.

It belongs to the class-I aminoacyl-tRNA synthetase family.

It is found in the cytoplasm. The catalysed reaction is tRNA(Leu) + L-leucine + ATP = L-leucyl-tRNA(Leu) + AMP + diphosphate. It carries out the reaction L-methionyl-tRNA(Leu) + H2O = tRNA(Leu) + L-methionine + H(+). With respect to regulation, 5-fluoro-1,3-dihydro-1-hydroxy-1,2-benzoxaborole inhibits LARS1 by forming a covalent adduct with the 3' adenosine of tRNA(Leu) at the editing site, thus locking the enzyme in an inactive conformation. Aminoacyl-tRNA synthetase that catalyzes the specific attachment of leucine to its cognate tRNA (tRNA(Leu)). It performs tRNA aminoacylation in a two-step reaction: Leu is initially activated by ATP to form a leucyl-adenylate (Leu-AMP) intermediate; then the leucyl moiety is transferred to the acceptor 3' end of the tRNA to yield leucyl-tRNA. To improve the fidelity of catalytic reactions, it is also able to hydrolyze misactivated aminoacyl-adenylate intermediates (pre-transfer editing) and mischarged aminoacyl-tRNAs (post-transfer editing). The protein is Leucine--tRNA ligase, cytoplasmic (LARS1) of Pongo abelii (Sumatran orangutan).